We begin with the raw amino-acid sequence, 207 residues long: CASP-like protein F16 (207 aa).

The segment at 1 to 30 (MEKSEKGNGVAPATRSPMALMGSSRNENQE) is disordered. Residues 1-37 (MEKSEKGNGVAPATRSPMALMGSSRNENQEVNTSMRT) lie on the Cytoplasmic side of the membrane. The helical transmembrane segment at 38–58 (AETMLRLVPMALGVAALVVML) threads the bilayer. At 59–79 (KNSQSNDFGSVSYSDLGAFRY) the chain is on the extracellular side. A helical transmembrane segment spans residues 80-100 (LVHANGICAGYSLLSAIIAAV). Residues 101 to 108 (PSPSTMPR) are Cytoplasmic-facing. A helical transmembrane segment spans residues 109–129 (AWTFFLLDQILTYVILGAAAV). Residues 130 to 159 (STEVLYLANKGDSAITWSAACGTFAGFCHK) lie on the Extracellular side of the membrane. A helical transmembrane segment spans residues 160–180 (ATIAVVITFVAVICYAVLSLV). The Cytoplasmic segment spans residues 181–207 (SSYRLFTKFDAPVNYPSKTIEATVFHG).

The protein belongs to the Casparian strip membrane proteins (CASP) family. Homodimer and heterodimers.

It localises to the cell membrane. The sequence is that of CASP-like protein F16 (F16) from Gossypium hirsutum (Upland cotton).